Consider the following 257-residue polypeptide: 5-oxoprolinase subunit A (257 aa).

The protein belongs to the LamB/PxpA family. As to quaternary structure, forms a complex composed of PxpA, PxpB and PxpC.

The enzyme catalyses 5-oxo-L-proline + ATP + 2 H2O = L-glutamate + ADP + phosphate + H(+). Its function is as follows. Catalyzes the cleavage of 5-oxoproline to form L-glutamate coupled to the hydrolysis of ATP to ADP and inorganic phosphate. The protein is 5-oxoprolinase subunit A of Oceanobacillus iheyensis (strain DSM 14371 / CIP 107618 / JCM 11309 / KCTC 3954 / HTE831).